Here is a 1508-residue protein sequence, read N- to C-terminus: Pleiotropic ABC efflux transporter of multiple drugs CDR1 (1508 aa).

The disordered stretch occupies residues 1-30 (MSEKPFVDAPPPEDGVAHQVSPHDNGSLSE). Residues 1-524 (MSEKPFVDAP…NFLRMKGDPS (524 aa)) are Cytoplasmic-facing. The region spanning 165-415 (DYWHDMRKID…FLDMGYECPQ (251 aa)) is the ABC transporter 1 domain. Residues 525–545 (IVIFSIFGQGVMGLILSSVFY) traverse the membrane as a helical segment. Topologically, residues 546 to 559 (NLQPTTGSFYYRGA) are extracellular. A helical membrane pass occupies residues 560 to 580 (AMFFAVLFNAFASLLEIMSLF). The Cytoplasmic segment spans residues 581-608 (EARPIVEKHKKYALYRPSADALASIISE). Residues 609–629 (LPVKLCMSTCFNFSFYFMVHF) form a helical membrane-spanning segment. The Extracellular portion of the chain corresponds to 630-633 (RRDP). Residues 634–654 (GRFFFYWLFCGLCTLCMSHMF) form a helical membrane-spanning segment. At 655–673 (RSLGAVSTSLAAAMTPATS) the chain is on the cytoplasmic side. The chain crosses the membrane as a helical span at residues 674–694 (VLLAMVIFTGFVIPIPSMLGW). Topologically, residues 695–775 (CRWIQYINPV…EYVNAHKWRN (81 aa)) are extracellular. The helical transmembrane segment at 776–796 (LGIVVAYIVVFLGVYIALTEF) threads the bilayer. Residues 797-1203 (NKGAMQKGEI…TFQQYWRSPG (407 aa)) lie on the Cytoplasmic side of the membrane. The segment at 839-860 (KISYSDAMEKDSGESSTSDDKL) is disordered. A compositionally biased stretch (basic and acidic residues) spans 845–860 (AMEKDSGESSTSDDKL). Residues 867-1110 (FHWKDLTYQV…GLIDYFEKHG (244 aa)) form the ABC transporter 2 domain. 903–910 (GASGAGKT) contributes to the ATP binding site. The helical transmembrane segment at 1204-1224 (YIYSKFFLVITASLFNGFAFF) threads the bilayer. Residues 1225–1239 (HSGTSQQGLQNQMFS) lie on the Extracellular side of the membrane. The helical transmembrane segment at 1240-1260 (MFMFYMPLQTLIQQMLPYYVM) threads the bilayer. Residues 1261–1288 (QREIYEVREAPSRTFSWFAFIASQITTE) are Cytoplasmic-facing. Residues 1289–1309 (IPFQVVLGTVAFFCWYYPVGL) form a helical membrane-spanning segment. Residues 1310–1326 (YQNATPTDTVHERGALM) are Extracellular-facing. The helical transmembrane segment at 1327–1347 (WLLVTAFYVYTISLGQMVVAF) threads the bilayer. The Cytoplasmic segment spans residues 1348-1362 (MEIADNAANMVNLMF). The chain crosses the membrane as a helical span at residues 1363–1383 (IMCLNFCGVLATPEALPGFWI). Residues 1384 to 1475 (FMYRCNPFTY…HAVYSERWRN (92 aa)) lie on the Extracellular side of the membrane. The chain crosses the membrane as a helical span at residues 1476-1496 (FGIFIAFIAINMIGTIFFYWL). At 1497–1508 (ARVPKSSKSKNH) the chain is on the cytoplasmic side.

It belongs to the ABC transporter superfamily.

It is found in the cell membrane. It carries out the reaction fluconazole(in) + ATP + H2O = fluconazole(out) + ADP + phosphate + H(+). It catalyses the reaction itraconazole(in) + ATP + H2O = itraconazole(out) + ADP + phosphate + H(+). The enzyme catalyses voriconazole(in) + ATP + H2O = voriconazole(out) + ADP + phosphate + H(+). The bis-benzodioxolylindolinone azoffluxin acts as an inhibitor of the transporter activity. Clorgyline analogs M19 and M25 inhibit the transcporter activity by uncoupling CDR1 ATPase activity from the active transport of substrates. Activity is also inhibited by beauvericin and oligomycin. Its function is as follows. Pleiotropic ABC efflux transporter that confers resistance to numerous chemicals including itraconazole, fluconazole, voriconazole and posaconazole. The protein is Pleiotropic ABC efflux transporter of multiple drugs CDR1 of Candidozyma auris (Yeast).